Here is a 91-residue protein sequence, read N- to C-terminus: UPF0250 protein PFLU_5418 (91 aa).

It belongs to the UPF0250 family.

This Pseudomonas fluorescens (strain SBW25) protein is UPF0250 protein PFLU_5418.